We begin with the raw amino-acid sequence, 1108 residues long: Lon protease homolog, mitochondrial (1108 aa).

The N-terminal 62 residues, 1 to 62, are a transit peptide targeting the mitochondrion; that stretch reads MLRGQSLPWR…RAFSTSSIRR (62 aa). Disordered stretches follow at residues 24–192 and 299–318; these read PLLP…QKPS and LPPGEQSKAGNTEDKAPEKK. Over residues 36 to 53 the composition is skewed to low complexity; that stretch reads RSNLSISRLSRSPSLSPR. Basic and acidic residues-rich tracts occupy residues 78–103 and 119–146; these read EQKDPNEQKDSDRSPEGRRRSPDSTG and KVAGEKEQRGVEEDAKKENVSIEGKSDP. Residues 161–171 show a composition bias toward polar residues; it reads SDTKSSASNGG. Composition is skewed to basic and acidic residues over residues 174-188 and 309-318; these read DGGRKGKKGSGDRAL and NTEDKAPEKK. The Lon N-terminal domain maps to 200 to 452; sequence VMAIPIAKRP…KALVVLKKEL (253 aa). An ATP-binding site is contributed by 605–612; sequence GPPGVGKT. The span at 821-855 shows a compositional bias: basic and acidic residues; sequence DKALTDEGKAAQEESKKETEEGDPKDPPADPEKST. The interval 821-862 is disordered; it reads DKALTDEGKAAQEESKKETEEGDPKDPPADPEKSTTETPRLA. One can recognise a Lon proteolytic domain in the interval 895–1081; it reads TFPPGVTMGL…SEVFNILFAE (187 aa). Catalysis depends on residues Ser987 and Lys1030.

The protein belongs to the peptidase S16 family. Homohexamer or homoheptamer. Organized in a ring with a central cavity.

It is found in the mitochondrion matrix. The enzyme catalyses Hydrolysis of proteins in presence of ATP.. ATP-dependent serine protease that mediates the selective degradation of misfolded, unassembled or oxidatively damaged polypeptides as well as certain short-lived regulatory proteins in the mitochondrial matrix. May also have a chaperone function in the assembly of inner membrane protein complexes. Participates in the regulation of mitochondrial gene expression and in the maintenance of the integrity of the mitochondrial genome. Binds to mitochondrial DNA in a site-specific manner. The sequence is that of Lon protease homolog, mitochondrial (pim1) from Aspergillus fumigatus (strain ATCC MYA-4609 / CBS 101355 / FGSC A1100 / Af293) (Neosartorya fumigata).